We begin with the raw amino-acid sequence, 465 residues long: Putative mannose-1-phosphate guanylyltransferase (465 aa).

The protein belongs to the mannose-6-phosphate isomerase type 2 family.

The catalysed reaction is alpha-D-mannose 1-phosphate + GTP + H(+) = GDP-alpha-D-mannose + diphosphate. The protein operates within nucleotide-sugar biosynthesis; GDP-alpha-D-mannose biosynthesis; GDP-alpha-D-mannose from alpha-D-mannose 1-phosphate (GTP route): step 1/1. Its pathway is bacterial outer membrane biogenesis; LPS O-antigen biosynthesis. The polypeptide is Putative mannose-1-phosphate guanylyltransferase (rfbA) (Vibrio cholerae serotype O1 (strain ATCC 39315 / El Tor Inaba N16961)).